Consider the following 531-residue polypeptide: Probable protein phosphatase 2C 66 (531 aa).

The tract at residues 1–47 is disordered; sequence MGSCLSSDLPPRAGAGAGASPGWPQRWRRRRQRGVERGGAVSGGGGG. The span at 10-25 shows a compositional bias: low complexity; it reads PPRAGAGAGASPGWPQ. The PPM-type phosphatase domain maps to 88–401; it reads AACLHTQQGR…DDCAVVCLFL (314 aa). Mn(2+) contacts are provided by aspartate 123 and glycine 124. The span at 151–172 shows a compositional bias: polar residues; the sequence is SANEDTSSHQNGSISGSVNSEE. Positions 151–176 are disordered; that stretch reads SANEDTSSHQNGSISGSVNSEESPVV. Residues aspartate 346 and aspartate 392 each coordinate Mn(2+).

The protein belongs to the PP2C family. The cofactor is Mg(2+). Requires Mn(2+) as cofactor.

The catalysed reaction is O-phospho-L-seryl-[protein] + H2O = L-seryl-[protein] + phosphate. It carries out the reaction O-phospho-L-threonyl-[protein] + H2O = L-threonyl-[protein] + phosphate. This Oryza sativa subsp. japonica (Rice) protein is Probable protein phosphatase 2C 66.